The following is a 520-amino-acid chain: Ribonuclease Y (520 aa).

The chain crosses the membrane as a helical span at residues 4–24 (VSGILLVLIGLLAGVGLGVLL). The region spanning 210 to 270 (TVSVVNLPNE…VRREVARVSL (61 aa)) is the KH domain. The region spanning 336-429 (VLQHSREVAF…VQAADALSGA (94 aa)) is the HD domain.

Belongs to the RNase Y family.

It is found in the cell membrane. In terms of biological role, endoribonuclease that initiates mRNA decay. The protein is Ribonuclease Y of Syntrophobacter fumaroxidans (strain DSM 10017 / MPOB).